Here is a 305-residue protein sequence, read N- to C-terminus: UPF0282 protein Pisl_0021 (305 aa).

This sequence belongs to the UPF0282 family.

The polypeptide is UPF0282 protein Pisl_0021 (Pyrobaculum islandicum (strain DSM 4184 / JCM 9189 / GEO3)).